We begin with the raw amino-acid sequence, 465 residues long: Trigger factor (465 aa).

The 86-residue stretch at 163–248 (GDVINFNFKG…INKIKENQPA (86 aa)) folds into the PPIase FKBP-type domain. A disordered region spans residues 431-465 (EIVNKNQNDNEIEQDKEQKDNNEEKIKQENNLENK). A compositionally biased stretch (basic and acidic residues) spans 443–465 (EQDKEQKDNNEEKIKQENNLENK).

This sequence belongs to the FKBP-type PPIase family. Tig subfamily.

It localises to the cytoplasm. The catalysed reaction is [protein]-peptidylproline (omega=180) = [protein]-peptidylproline (omega=0). Functionally, involved in protein export. Acts as a chaperone by maintaining the newly synthesized protein in an open conformation. Functions as a peptidyl-prolyl cis-trans isomerase. This Mesomycoplasma hyopneumoniae (strain 232) (Mycoplasma hyopneumoniae) protein is Trigger factor.